The sequence spans 158 residues: Small ribosomal subunit protein uS17 (158 aa).

Residue Ala2 is modified to N-acetylalanine. Citrulline is present on Arg22. An N6-acetyllysine mark is found at Lys38, Lys45, and Lys58. Cys60 carries the S-palmitoyl cysteine lipid modification. Ser67 is subject to Phosphoserine. An Omega-N-methylarginine modification is found at Arg69. The residue at position 110 (Ser110) is a Phosphoserine.

The protein belongs to the universal ribosomal protein uS17 family. In terms of assembly, component of the small ribosomal subunit. Part of the small subunit (SSU) processome, composed of more than 70 proteins and the RNA chaperone small nucleolar RNA (snoRNA) U3. Citrullinated by PADI4.

Its subcellular location is the cytoplasm. It localises to the nucleus. The protein localises to the nucleolus. Functionally, component of the small ribosomal subunit. The ribosome is a large ribonucleoprotein complex responsible for the synthesis of proteins in the cell. Part of the small subunit (SSU) processome, first precursor of the small eukaryotic ribosomal subunit. During the assembly of the SSU processome in the nucleolus, many ribosome biogenesis factors, an RNA chaperone and ribosomal proteins associate with the nascent pre-rRNA and work in concert to generate RNA folding, modifications, rearrangements and cleavage as well as targeted degradation of pre-ribosomal RNA by the RNA exosome. The sequence is that of Small ribosomal subunit protein uS17 (Rps11) from Mus musculus (Mouse).